The chain runs to 88 residues: Small ribosomal subunit protein uS17 (88 aa).

It belongs to the universal ribosomal protein uS17 family. As to quaternary structure, part of the 30S ribosomal subunit.

Its function is as follows. One of the primary rRNA binding proteins, it binds specifically to the 5'-end of 16S ribosomal RNA. The protein is Small ribosomal subunit protein uS17 of Lactobacillus helveticus (strain DPC 4571).